Reading from the N-terminus, the 671-residue chain is MDGEEAADIDETNSSNPHAAAVVATEMQAVAEAERPEEQQQQQMPQTSSGEADGDVDGDGVSAIAALATRVRLENMLEVVDNMFDEVSELMVDVTELMQRASELTGTTTPTPTAPENQAENAPEIEPAQPATPPEIAELLEEAIAANPLGHNVLNPGDDARSISSRHSGSDMSLDSPGSEDDSDAEAVPRWIIPENRVRSAVDMLVSQARNQDGGIATLLRRENFLQRVRSMVFSQDRVRGRESDEANLDAGNVVDEELSPELSPAPLDIDMEEGVRFDTNLPAEHSYFGPNLNRVPGVDYLEVGSTHRMLIFMHQHILFPGEVLPFMIDGSIIDEEIHDTGRDGVIFGVGFPLMQPPDDNPHKLYGVTCQIYEKGESGRQMVFYKSRALQRIVINCDDIQGPPQYIARNPTMKCYSKVKVLPEYFLPEPLKCIDMGSLNRFRDLPSMQDKFRRYQLTSTPWPLEACEEYSFEHIVEMARKKLEVHKIDTMPKCPIQLSYWLVRNLHLTEKMMRLTFLTDSVNTRLQIIGSTLKQESLFYCRYCNSSLAYCSDLFAMSKHGVQTQYCNSAGYIHETNTVYRIIAHAVGYSGEPSTEFSWFPGYQWHIIICKFCAQHVGWEFKAVDPNLAPKVFFGLAGSSVRIGKTSERTPTQGNPFVVRNLLHLVFREIE.

The span at 1-11 (MDGEEAADIDE) shows a compositional bias: acidic residues. Disordered stretches follow at residues 1 to 59 (MDGE…VDGD), 104 to 130 (LTGT…PAQP), and 150 to 187 (GHNV…DAEA). 2 stretches are compositionally biased toward low complexity: residues 39 to 51 (QQQQ…SSGE) and 105 to 115 (TGTTTPTPTAP). The span at 162-173 (SISSRHSGSDMS) shows a compositional bias: polar residues. One can recognise a Lon N-terminal domain in the interval 309-537 (RMLIFMHQHI…IIGSTLKQES (229 aa)). One can recognise a CULT domain in the interval 536 to 645 (ESLFYCRYCN…LAGSSVRIGK (110 aa)). Zn(2+) contacts are provided by Cys-541, Cys-544, Cys-610, and Cys-613.

The protein belongs to the CRBN family. As to quaternary structure, likely a component of a DCX (DDB1-CUL4-X-box) protein ligase complex. May interact with pic/DDB1. Post-translationally, ubiquitinated.

Its subcellular location is the nucleus. It participates in protein modification; protein ubiquitination. In terms of biological role, substrate recognition component of a DCX (DDB1-CUL4-X-box) E3 protein ligase complex that mediates the ubiquitination and subsequent proteasomal degradation of target proteins. Has an essential role in mediating growth by negatively regulating insulin signaling. It also has a role in maintaining presynaptic function in the neuromuscular junction synapses of third-instar larvae. The polypeptide is Protein cereblon (Drosophila grimshawi (Hawaiian fruit fly)).